Reading from the N-terminus, the 502-residue chain is Maturase K (502 aa).

The protein belongs to the intron maturase 2 family. MatK subfamily.

The protein localises to the plastid. It is found in the chloroplast. Usually encoded in the trnK tRNA gene intron. Probably assists in splicing its own and other chloroplast group II introns. The chain is Maturase K from Spiraea cantoniensis (Reeve's meadowsweet).